The chain runs to 490 residues: GTPase Der (490 aa).

2 consecutive EngA-type G domains span residues 3-166 (PVVA…MEDL) and 203-376 (IKLA…DSST). Residues 9–16 (GRPNVGKS), 56–60 (DTGGI), 118–121 (NKID), 209–216 (GRPNVGKS), 256–260 (DTAGV), and 321–324 (NKWD) contribute to the GTP site. The KH-like domain occupies 377–461 (RRVGTSMLTR…PIRIQFKEGE (85 aa)).

It belongs to the TRAFAC class TrmE-Era-EngA-EngB-Septin-like GTPase superfamily. EngA (Der) GTPase family. Associates with the 50S ribosomal subunit.

GTPase that plays an essential role in the late steps of ribosome biogenesis. This is GTPase Der from Shigella boydii serotype 18 (strain CDC 3083-94 / BS512).